The sequence spans 321 residues: Lipoyl synthase (321 aa).

[4Fe-4S] cluster-binding residues include C68, C73, C79, C94, C98, C101, and S308. The Radical SAM core domain maps to 80–297; it reads FNHGTATFMI…KAEAMAMGFT (218 aa).

Belongs to the radical SAM superfamily. Lipoyl synthase family. [4Fe-4S] cluster serves as cofactor.

The protein localises to the cytoplasm. It carries out the reaction [[Fe-S] cluster scaffold protein carrying a second [4Fe-4S](2+) cluster] + N(6)-octanoyl-L-lysyl-[protein] + 2 oxidized [2Fe-2S]-[ferredoxin] + 2 S-adenosyl-L-methionine + 4 H(+) = [[Fe-S] cluster scaffold protein] + N(6)-[(R)-dihydrolipoyl]-L-lysyl-[protein] + 4 Fe(3+) + 2 hydrogen sulfide + 2 5'-deoxyadenosine + 2 L-methionine + 2 reduced [2Fe-2S]-[ferredoxin]. It functions in the pathway protein modification; protein lipoylation via endogenous pathway; protein N(6)-(lipoyl)lysine from octanoyl-[acyl-carrier-protein]: step 2/2. Its function is as follows. Catalyzes the radical-mediated insertion of two sulfur atoms into the C-6 and C-8 positions of the octanoyl moiety bound to the lipoyl domains of lipoate-dependent enzymes, thereby converting the octanoylated domains into lipoylated derivatives. In Enterobacter sp. (strain 638), this protein is Lipoyl synthase.